Consider the following 58-residue polypeptide: Large ribosomal subunit protein uL30 (58 aa).

Belongs to the universal ribosomal protein uL30 family. Part of the 50S ribosomal subunit.

The sequence is that of Large ribosomal subunit protein uL30 from Pseudomonas putida (strain ATCC 700007 / DSM 6899 / JCM 31910 / BCRC 17059 / LMG 24140 / F1).